A 355-amino-acid chain; its full sequence is Serum paraoxonase/arylesterase 1 (355 aa).

C42 and C353 are oxidised to a cystine. Ca(2+) is bound by residues E53 and D54. The Proton acceptor role is filled by H115. I117, N168, D169, and N224 together coordinate Ca(2+). A glycan (N-linked (GlcNAc...) asparagine) is linked at N253. D269 and N270 together coordinate Ca(2+). Residues N270 and N324 are each glycosylated (N-linked (GlcNAc...) asparagine).

This sequence belongs to the paraoxonase family. As to quaternary structure, homodimer. Interacts with CLU. The cofactor is Ca(2+). Post-translationally, glycosylated. In terms of processing, the signal sequence is not cleaved. Plasma. Associated with HDL.

It localises to the secreted. The protein localises to the extracellular space. The enzyme catalyses a phenyl acetate + H2O = a phenol + acetate + H(+). It carries out the reaction An aryl dialkyl phosphate + H2O = dialkyl phosphate + an aryl alcohol.. The catalysed reaction is an N-acyl-L-homoserine lactone + H2O = an N-acyl-L-homoserine + H(+). Hydrolyzes the toxic metabolites of a variety of organophosphorus insecticides. Capable of hydrolyzing a broad spectrum of organophosphate substrates and lactones, and a number of aromatic carboxylic acid esters. Mediates an enzymatic protection of low density lipoproteins against oxidative modification. This is Serum paraoxonase/arylesterase 1 (Pon1) from Rattus norvegicus (Rat).